We begin with the raw amino-acid sequence, 362 residues long: Outer membrane porin F (362 aa).

The N-terminal stretch at 1-22 is a signal peptide; sequence MMKRNILAVIVPALLVAGTANA.

The protein belongs to the Gram-negative porin family. In terms of assembly, homotrimer. Forms mixed heterotrimers with OmpC; other mixed heterotrimers are also probable.

The protein resides in the cell outer membrane. In terms of biological role, forms pores that allow passive diffusion of small molecules across the outer membrane. Functionally, (Microbial infection) Is the major receptor for colicin E5. (Microbial infection) A mixed OmpC-OmpF heterotrimer is the outer membrane receptor for toxin CdiA-EC536. The sequence is that of Outer membrane porin F (ompF) from Escherichia coli O6:K15:H31 (strain 536 / UPEC).